The primary structure comprises 257 residues: MKKNTLLKVGLCVSLLGTTQFVSTISSVQASQKVEQIVIKNETGTISISQLNKNVWVHTELGYFNGEAVPSNGLVLNTSKGLVLVDSSWDNKLTKELIEMVEKKFQKRVTDVIITHAHADRIGGITALKERGIKAHSTALTAELAKKSGYEEPLGDLQTVTNLKFGNTKVETFYPGKGHTEDNIVVWLPQYQILAGGCLVKSAEAKNLGNVADAYVNEWSTSIENMLKRYRNINLVVPGHGKVGDKGLLLHTLDLLK.

The N-terminal stretch at 1 to 30 (MKKNTLLKVGLCVSLLGTTQFVSTISSVQA) is a signal peptide. Residues His116, His118, Asp120, His179, and Cys198 each contribute to the Zn(2+) site. Substrate-binding residues include Lys201 and Asn210. Residue His240 participates in Zn(2+) binding.

It belongs to the metallo-beta-lactamase superfamily. Class-B beta-lactamase family. As to quaternary structure, monomer. Requires Zn(2+) as cofactor.

The protein localises to the periplasm. It catalyses the reaction a beta-lactam + H2O = a substituted beta-amino acid. Its function is as follows. Confers resistance to the different beta-lactams antibiotics (penicillin, cephalosporin and carbapenem) via the hydrolysis of the beta-lactam ring. The protein is Metallo-beta-lactamase type 2 of Bacillus sp. (strain 170).